The chain runs to 145 residues: Probable flagellum biosynthesis repressor protein FlbT (145 aa).

The protein belongs to the FlbT family.

Its function is as follows. Has a post-transcriptional repressor function in flagellum biogenesis. Associates with the 5'-UTR of fljK mRNA and promotes its degradation. The protein is Probable flagellum biosynthesis repressor protein FlbT of Chelativorans sp. (strain BNC1).